The sequence spans 492 residues: Protein nucleotidyltransferase YdiU (492 aa).

ATP-binding residues include glycine 88, glycine 90, arginine 91, lysine 111, aspartate 123, glycine 124, arginine 174, and arginine 181. Aspartate 250 serves as the catalytic Proton acceptor. The Mg(2+) site is built by asparagine 251 and aspartate 260. Aspartate 260 contacts ATP.

It belongs to the SELO family. Requires Mg(2+) as cofactor. It depends on Mn(2+) as a cofactor.

The enzyme catalyses L-seryl-[protein] + ATP = 3-O-(5'-adenylyl)-L-seryl-[protein] + diphosphate. It catalyses the reaction L-threonyl-[protein] + ATP = 3-O-(5'-adenylyl)-L-threonyl-[protein] + diphosphate. The catalysed reaction is L-tyrosyl-[protein] + ATP = O-(5'-adenylyl)-L-tyrosyl-[protein] + diphosphate. It carries out the reaction L-histidyl-[protein] + UTP = N(tele)-(5'-uridylyl)-L-histidyl-[protein] + diphosphate. The enzyme catalyses L-seryl-[protein] + UTP = O-(5'-uridylyl)-L-seryl-[protein] + diphosphate. It catalyses the reaction L-tyrosyl-[protein] + UTP = O-(5'-uridylyl)-L-tyrosyl-[protein] + diphosphate. Functionally, nucleotidyltransferase involved in the post-translational modification of proteins. It can catalyze the addition of adenosine monophosphate (AMP) or uridine monophosphate (UMP) to a protein, resulting in modifications known as AMPylation and UMPylation. This is Protein nucleotidyltransferase YdiU from Rhodopseudomonas palustris (strain TIE-1).